Consider the following 287-residue polypeptide: Bifunctional protein FolD (287 aa).

NADP(+) contacts are provided by residues 165–167, Ser190, and Ile231; that span reads GRS.

It belongs to the tetrahydrofolate dehydrogenase/cyclohydrolase family. Homodimer.

It catalyses the reaction (6R)-5,10-methylene-5,6,7,8-tetrahydrofolate + NADP(+) = (6R)-5,10-methenyltetrahydrofolate + NADPH. The catalysed reaction is (6R)-5,10-methenyltetrahydrofolate + H2O = (6R)-10-formyltetrahydrofolate + H(+). The protein operates within one-carbon metabolism; tetrahydrofolate interconversion. Catalyzes the oxidation of 5,10-methylenetetrahydrofolate to 5,10-methenyltetrahydrofolate and then the hydrolysis of 5,10-methenyltetrahydrofolate to 10-formyltetrahydrofolate. The protein is Bifunctional protein FolD of Carboxydothermus hydrogenoformans (strain ATCC BAA-161 / DSM 6008 / Z-2901).